The chain runs to 616 residues: Dihydroxy-acid dehydratase (616 aa).

D81 is a Mg(2+) binding site. Residue C122 coordinates [2Fe-2S] cluster. Residues D123 and K124 each coordinate Mg(2+). The residue at position 124 (K124) is an N6-carboxylysine. C195 contacts [2Fe-2S] cluster. E491 provides a ligand contact to Mg(2+). S517 acts as the Proton acceptor in catalysis.

This sequence belongs to the IlvD/Edd family. As to quaternary structure, homodimer. [2Fe-2S] cluster is required as a cofactor. It depends on Mg(2+) as a cofactor.

The enzyme catalyses (2R)-2,3-dihydroxy-3-methylbutanoate = 3-methyl-2-oxobutanoate + H2O. The catalysed reaction is (2R,3R)-2,3-dihydroxy-3-methylpentanoate = (S)-3-methyl-2-oxopentanoate + H2O. The protein operates within amino-acid biosynthesis; L-isoleucine biosynthesis; L-isoleucine from 2-oxobutanoate: step 3/4. Its pathway is amino-acid biosynthesis; L-valine biosynthesis; L-valine from pyruvate: step 3/4. In terms of biological role, functions in the biosynthesis of branched-chain amino acids. Catalyzes the dehydration of (2R,3R)-2,3-dihydroxy-3-methylpentanoate (2,3-dihydroxy-3-methylvalerate) into 2-oxo-3-methylpentanoate (2-oxo-3-methylvalerate) and of (2R)-2,3-dihydroxy-3-methylbutanoate (2,3-dihydroxyisovalerate) into 2-oxo-3-methylbutanoate (2-oxoisovalerate), the penultimate precursor to L-isoleucine and L-valine, respectively. The protein is Dihydroxy-acid dehydratase of Shewanella woodyi (strain ATCC 51908 / MS32).